We begin with the raw amino-acid sequence, 151 residues long: Ribosome maturation factor RimP (151 aa).

It belongs to the RimP family.

The protein localises to the cytoplasm. Functionally, required for maturation of 30S ribosomal subunits. The polypeptide is Ribosome maturation factor RimP (Vibrio cholerae serotype O1 (strain ATCC 39541 / Classical Ogawa 395 / O395)).